Here is a 259-residue protein sequence, read N- to C-terminus: MSQLQWLDADNLRFPPTHSALRDPDGLLAVGGDLSPARLIESYSHGIFPWYSDGQPLLWWTPDPRMVLRPAHVHRGRTLRKLLRQHPFTVTVDSAFDAVAQACGTIEREGQDGTWITQEMLAAYSELNRLGVAHSLEVWLQNELVGGLYGIALGTVFFGESMFSRVSGASKVGFSILCQQLENWGFELVDCQIHSGYLASFGAQEIPRATFEKLLAQHVWNIPRVPSAACYQSPIPTTSRPCPPLINWQMAWTAGEDLA.

Belongs to the L/F-transferase family.

The protein localises to the cytoplasm. It carries out the reaction N-terminal L-lysyl-[protein] + L-leucyl-tRNA(Leu) = N-terminal L-leucyl-L-lysyl-[protein] + tRNA(Leu) + H(+). The catalysed reaction is N-terminal L-arginyl-[protein] + L-leucyl-tRNA(Leu) = N-terminal L-leucyl-L-arginyl-[protein] + tRNA(Leu) + H(+). The enzyme catalyses L-phenylalanyl-tRNA(Phe) + an N-terminal L-alpha-aminoacyl-[protein] = an N-terminal L-phenylalanyl-L-alpha-aminoacyl-[protein] + tRNA(Phe). Functionally, functions in the N-end rule pathway of protein degradation where it conjugates Leu, Phe and, less efficiently, Met from aminoacyl-tRNAs to the N-termini of proteins containing an N-terminal arginine or lysine. The protein is Leucyl/phenylalanyl-tRNA--protein transferase of Teredinibacter turnerae (strain ATCC 39867 / T7901).